A 475-amino-acid chain; its full sequence is ATP synthase subunit beta (475 aa).

148–155 is an ATP binding site; sequence GGAGVGKT.

It belongs to the ATPase alpha/beta chains family. In terms of assembly, F-type ATPases have 2 components, CF(1) - the catalytic core - and CF(0) - the membrane proton channel. CF(1) has five subunits: alpha(3), beta(3), gamma(1), delta(1), epsilon(1). CF(0) has three main subunits: a(1), b(2) and c(9-12). The alpha and beta chains form an alternating ring which encloses part of the gamma chain. CF(1) is attached to CF(0) by a central stalk formed by the gamma and epsilon chains, while a peripheral stalk is formed by the delta and b chains.

It localises to the cell inner membrane. It carries out the reaction ATP + H2O + 4 H(+)(in) = ADP + phosphate + 5 H(+)(out). Produces ATP from ADP in the presence of a proton gradient across the membrane. The catalytic sites are hosted primarily by the beta subunits. This chain is ATP synthase subunit beta, found in Psychrobacter sp. (strain PRwf-1).